Consider the following 378-residue polypeptide: Putative glutamate--cysteine ligase 2 (378 aa).

It belongs to the glutamate--cysteine ligase type 2 family. YbdK subfamily.

It carries out the reaction L-cysteine + L-glutamate + ATP = gamma-L-glutamyl-L-cysteine + ADP + phosphate + H(+). ATP-dependent carboxylate-amine ligase which exhibits weak glutamate--cysteine ligase activity. The chain is Putative glutamate--cysteine ligase 2 from Salinispora tropica (strain ATCC BAA-916 / DSM 44818 / JCM 13857 / NBRC 105044 / CNB-440).